Reading from the N-terminus, the 240-residue chain is Aliphatic sulfonates import ATP-binding protein SsuB 2 (240 aa).

The 217-residue stretch at 2–218 (VRTRELRRGF…RHSAPEFIHA (217 aa)) folds into the ABC transporter domain. 34–41 (GRSGSGKS) contacts ATP.

The protein belongs to the ABC transporter superfamily. Aliphatic sulfonates importer (TC 3.A.1.17.2) family. As to quaternary structure, the complex is composed of two ATP-binding proteins (SsuB), two transmembrane proteins (SsuC) and a solute-binding protein (SsuA).

Its subcellular location is the cell membrane. The enzyme catalyses ATP + H2O + aliphatic sulfonate-[sulfonate-binding protein]Side 1 = ADP + phosphate + aliphatic sulfonateSide 2 + [sulfonate-binding protein]Side 1.. Part of the ABC transporter complex SsuABC involved in aliphatic sulfonates import. Responsible for energy coupling to the transport system. The sequence is that of Aliphatic sulfonates import ATP-binding protein SsuB 2 from Nocardia farcinica (strain IFM 10152).